The primary structure comprises 332 residues: L-lactate dehydrogenase C chain (332 aa).

NAD(+)-binding positions include Gly-29–Lys-57 and Arg-99. Residues Arg-106, Asn-138, and Arg-169 each coordinate substrate. An NAD(+)-binding site is contributed by Asn-138. His-193 (proton acceptor) is an active-site residue. Thr-248 serves as a coordination point for substrate. Ser-301 carries the post-translational modification Phosphoserine.

Belongs to the LDH/MDH superfamily. LDH family. As to quaternary structure, homotetramer. Interacts with RABL2/RABL2A; binds preferentially to GTP-bound RABL2.

The protein localises to the cytoplasm. It catalyses the reaction (S)-lactate + NAD(+) = pyruvate + NADH + H(+). The protein operates within fermentation; pyruvate fermentation to lactate; (S)-lactate from pyruvate: step 1/1. Its function is as follows. Possible role in sperm motility. In Sus scrofa (Pig), this protein is L-lactate dehydrogenase C chain (LDHC).